Reading from the N-terminus, the 1106-residue chain is Protein transport protein Sec31A (1106 aa).

7 WD repeats span residues 4–47 (KEVD…EIFE), 68–111 (RYHK…AGDK), 120–160 (KHTG…TPMT), 166–206 (QPPE…PIIK), 209–254 (DHSN…SPLR), 258–298 (NHAR…VLYE), and 301–342 (TNTQ…DGLR). Residues 161–471 (PGAKTQPPED…IDASQTEFEK (311 aa)) are interaction with SEC13. The stretch at 397-430 (SFSFGGKLVTFENVRMPSHQGAEQQQQQHHVFIS) is one WD 8; interaction with SEC13 repeat. Phosphoserine is present on residues Ser-527 and Ser-532. Lys-647 is covalently cross-linked (Glycyl lysine isopeptide (Lys-Gly) (interchain with G-Cter in ubiquitin)). Phosphoserine is present on Ser-799. Positions 800-999 (PKIPYEEQQL…TKKITKKPIP (200 aa)) are interaction with PDCD6. The ALG-2-binding site motif-2 (ABS-2) motif lies at 842–848 (GFIMHGN). Residues 859–980 (TSPGHMHTQV…EGAPGAPIGN (122 aa)) are disordered. Residues 917 to 939 (PQSQMLQQQPSAPVPLSSQSSFP) are compositionally biased toward polar residues. Residue Thr-1047 is modified to Phosphothreonine. A Phosphoserine modification is found at Ser-1049. Lys-1103 participates in a covalent cross-link: Glycyl lysine isopeptide (Lys-Gly) (interchain with G-Cter in ubiquitin).

It belongs to the WD repeat SEC31 family. As to quaternary structure, COPII is composed of at least 5 proteins: the SEC23/24 complex, the SEC13/31 complex and SAR1. SEC13 and SEC31 make a 2:2 tetramer that forms the edge element of the COPII outer coat. The tetramer self-assembles in multiple copies to form the complete polyhedral cage. Interacts (via WD 8) with SEC13. Interacts with PDCD6; interaction takes place in response to cytosolic calcium increase and leads to bridge together the BCR(KLHL12) complex and SEC31A, leading to monoubiquitination. Interacts with KLHL12. Post-translationally, monoubiquitinated by the BCR(KLHL12) E3 ubiquitin ligase complex, leading to regulate the size of COPII coats.

Its subcellular location is the cytoplasm. The protein resides in the cytoplasmic vesicle. It localises to the COPII-coated vesicle membrane. It is found in the endoplasmic reticulum membrane. Functionally, component of the coat protein complex II (COPII) which promotes the formation of transport vesicles from the endoplasmic reticulum (ER). The coat has two main functions, the physical deformation of the endoplasmic reticulum membrane into vesicles and the selection of cargo molecules. The polypeptide is Protein transport protein Sec31A (SEC31A) (Pongo abelii (Sumatran orangutan)).